The following is an 830-amino-acid chain: Nucleolar complex-associated protein 3 (830 aa).

Disordered stretches follow at residues 1–22 (MGKN…DVAE), 67–86 (KYEE…GNGE), 112–169 (KSKL…EETP), 391–436 (GKPN…KIRD), and 802–830 (LQSE…KKQI). 2 coiled-coil regions span residues 61–81 (VMTV…LQEE) and 111–156 (KKSK…HEKD). Residues 67–84 (KYEEERSKRKTLQEEKGN) show a composition bias toward basic and acidic residues. Positions 118–129 (AETDEAEKDVLE) are enriched in acidic residues. A compositionally biased stretch (basic and acidic residues) spans 130–140 (DEHVLNKSQRR). Residues 138–145 (QRREKAKK) carry the Nuclear localization signal 1 motif. Residues 141–150 (EKAKKSKREA) show a composition bias toward basic residues. Positions 159 to 168 (DEILQEEEET) are enriched in acidic residues. Positions 391 to 400 (GKPNKEDEHN) are enriched in basic and acidic residues. Residues 400-429 (NKKYKKNNKRKTQEEQNQVQENERKKSKKD) are a coiled coil. Positions 408 to 415 (KRKTQEEQ) match the Nuclear localization signal 2 motif. The span at 420–436 (ENERKKSKKDMMSKIRD) shows a compositional bias: basic and acidic residues. The Nuclear localization signal 3 motif lies at 806–813 (EKKPLKKQ). Residues 817–830 (VKKKLKNPKSKKQI) show a composition bias toward basic residues.

Belongs to the CBF/MAK21 family. Component of nucleolar complexes. Interacts with RBL and NOC2 in both the nucleolus and nucleoplasm.

It localises to the nucleus. The protein resides in the nucleolus. It is found in the nucleoplasm. May be required for synthesis of 60S ribosomal subunits and the transport of pre-ribosomes from the nucleoplasm to the cytoplasm. Also required for initiation of DNA replication. The protein is Nucleolar complex-associated protein 3 of Arabidopsis thaliana (Mouse-ear cress).